Consider the following 1405-residue polypeptide: DNA-directed RNA polymerase subunit beta' (1405 aa).

Cys-70, Cys-72, Cys-85, and Cys-88 together coordinate Zn(2+). Residues Asp-460, Asp-462, and Asp-464 each coordinate Mg(2+). Residues Cys-814, Cys-888, Cys-895, and Cys-898 each contribute to the Zn(2+) site.

This sequence belongs to the RNA polymerase beta' chain family. The RNAP catalytic core consists of 2 alpha, 1 beta, 1 beta' and 1 omega subunit. When a sigma factor is associated with the core the holoenzyme is formed, which can initiate transcription. It depends on Mg(2+) as a cofactor. The cofactor is Zn(2+).

The catalysed reaction is RNA(n) + a ribonucleoside 5'-triphosphate = RNA(n+1) + diphosphate. Its function is as follows. DNA-dependent RNA polymerase catalyzes the transcription of DNA into RNA using the four ribonucleoside triphosphates as substrates. This Shewanella oneidensis (strain ATCC 700550 / JCM 31522 / CIP 106686 / LMG 19005 / NCIMB 14063 / MR-1) protein is DNA-directed RNA polymerase subunit beta'.